The primary structure comprises 113 residues: ATP-dependent Clp protease adapter protein ClpS (113 aa).

The segment covering M1 to R11 has biased composition (basic and acidic residues). The tract at residues M1–K25 is disordered.

It belongs to the ClpS family. As to quaternary structure, binds to the N-terminal domain of the chaperone ClpA.

Its function is as follows. Involved in the modulation of the specificity of the ClpAP-mediated ATP-dependent protein degradation. The sequence is that of ATP-dependent Clp protease adapter protein ClpS from Roseobacter denitrificans (strain ATCC 33942 / OCh 114) (Erythrobacter sp. (strain OCh 114)).